Here is a 291-residue protein sequence, read N- to C-terminus: N-acetylmannosamine kinase (291 aa).

ATP-binding positions include 5 to 12 and 132 to 139; these read AIDIGGTK and GVGGGVVS. Zn(2+)-binding residues include His-156, Cys-166, Cys-168, and Cys-173.

It belongs to the ROK (NagC/XylR) family. NanK subfamily. In terms of assembly, homodimer.

The catalysed reaction is an N-acyl-D-mannosamine + ATP = an N-acyl-D-mannosamine 6-phosphate + ADP + H(+). The protein operates within amino-sugar metabolism; N-acetylneuraminate degradation; D-fructose 6-phosphate from N-acetylneuraminate: step 2/5. Functionally, catalyzes the phosphorylation of N-acetylmannosamine (ManNAc) to ManNAc-6-P. The polypeptide is N-acetylmannosamine kinase (Escherichia coli O139:H28 (strain E24377A / ETEC)).